Here is a 323-residue protein sequence, read N- to C-terminus: Pseudouridine-5'-phosphate glycosidase (323 aa).

Residue Glu43 is the Proton donor of the active site. Substrate is bound by residues Lys104 and Val124. Asp156 contacts Mn(2+). 158–160 (SAD) contributes to the substrate binding site. Residue Lys177 is the Nucleophile of the active site.

It belongs to the pseudouridine-5'-phosphate glycosidase family. Homotrimer. Requires Mn(2+) as cofactor.

It carries out the reaction D-ribose 5-phosphate + uracil = psi-UMP + H2O. Functionally, catalyzes the reversible cleavage of pseudouridine 5'-phosphate (PsiMP) to ribose 5-phosphate and uracil. Functions biologically in the cleavage direction, as part of a pseudouridine degradation pathway. In Streptomyces griseus subsp. griseus (strain JCM 4626 / CBS 651.72 / NBRC 13350 / KCC S-0626 / ISP 5235), this protein is Pseudouridine-5'-phosphate glycosidase.